We begin with the raw amino-acid sequence, 359 residues long: 5-amino-6-(D-ribitylamino)uracil--L-tyrosine 4-hydroxyphenyl transferase (359 aa).

The region spanning 45–282 (VTYVLNANIN…VYAISRIFFK (238 aa)) is the Radical SAM core domain. Residues Cys59, Cys63, and Cys66 each contribute to the [4Fe-4S] cluster site.

Belongs to the radical SAM superfamily. CofH family. In terms of assembly, consists of two subunits, CofG and CofH. [4Fe-4S] cluster is required as a cofactor.

The catalysed reaction is 5-amino-6-(D-ribitylamino)uracil + L-tyrosine + S-adenosyl-L-methionine = 5-amino-5-(4-hydroxybenzyl)-6-(D-ribitylimino)-5,6-dihydrouracil + 2-iminoacetate + 5'-deoxyadenosine + L-methionine + H(+). The protein operates within cofactor biosynthesis; coenzyme F0 biosynthesis. Catalyzes the radical-mediated synthesis of 5-amino-5-(4-hydroxybenzyl)-6-(D-ribitylimino)-5,6-dihydrouracil from 5-amino-6-(D-ribitylamino)uracil and L-tyrosine. This chain is 5-amino-6-(D-ribitylamino)uracil--L-tyrosine 4-hydroxyphenyl transferase, found in Methanococcus vannielii (strain ATCC 35089 / DSM 1224 / JCM 13029 / OCM 148 / SB).